We begin with the raw amino-acid sequence, 184 residues long: MKVIAVTGYKPFELGIFKNDHPGVECIKKALRRKLTAFVEDGLEWVIISGQLGVELWTAEVVFEIQVEYPDLKLAVFTPFLEQEEGWKEDNREYYEFILSQADHVDSITKRKYESPEQFKLKNQFFIEKSDALLAVYDEEKPGSPKYIVEAAKKKGEIENYHSYFILFSDLQDIIEEEQWNNAE.

The protein belongs to the UPF0398 family.

The chain is UPF0398 protein BCAH820_1652 from Bacillus cereus (strain AH820).